The primary structure comprises 1373 residues: Actin cytoskeleton-regulatory complex protein PAN1 (1373 aa).

Positions 116 to 205 (DQKKFEHLFR…EKWANEVKSF (90 aa)) constitute an EH 1 domain. The EF-hand 1 domain maps to 149–184 (LTPVTLAEIWSLSDTNKSGSLLFPEFALSLHLCSMA). Disordered regions lie at residues 271–362 (GGGL…QQQS) and 385–409 (AQRTGPLQSQSTGFQPAPLQSQPTG). Composition is skewed to low complexity over residues 290-309 (TTSFSAPTAPTAPTAAPLAS) and 341-362 (PQQLQQQSTGYQPQLQQLQQQS). Polar residues predominate over residues 389–408 (GPLQSQSTGFQPAPLQSQPT). One can recognise an EH 2 domain in the interval 465–554 (EKSIYDGIFQ…PELIPPSNKY (90 aa)). Positions 498-533 (LSRPDLESIWTLADTSDRGKLNKDEFSVAMHLVYRR) constitute an EF-hand 2 domain. Disordered stretches follow at residues 562-622 (MKNS…SSSD), 739-758 (SWNPDSNESEIQGTGPNGEV), 876-914 (QNSSSLESSTVSSTAEVSQPASSVSSQPVSASSSYRTPE), 931-1089 (RLAK…TAED), 1103-1335 (EAVP…APPV), and 1349-1373 (GKSLKKVDASQQKISSNDLAGTVLS). Residues 571–580 (NNKSYSGGKQ) show a composition bias toward polar residues. A compositionally biased stretch (basic and acidic residues) spans 581 to 590 (TKSDGTRFKN). A compositionally biased stretch (polar residues) spans 739-752 (SWNPDSNESEIQGT). Low complexity-rich tracts occupy residues 878 to 909 (SSSLESSTVSSTAEVSQPASSVSSQPVSASSS) and 965 to 977 (PAVVESAAVSPPV). Residues 1007–1066 (DDEEYAAILKQKQQLEAKEKERKLAKQKQKQARLDKIKKEMEEIKRRQAEAEAEEDSDEE) are a coiled coil. Composition is skewed to basic and acidic residues over residues 1019-1030 (QQLEAKEKERKL) and 1038-1056 (ARLDKIKKEMEEIKRRQAE). Over residues 1057-1067 (AEAEEDSDEEP) the composition is skewed to acidic residues. Polar residues-rich tracts occupy residues 1070–1079 (VPTYTVSNSA) and 1118–1134 (NPFSKVQATPTGNSTNP). A compositionally biased stretch (basic and acidic residues) spans 1139–1149 (TTKESTIDPKK). Residues 1154-1166 (RASQRGLSKNDGW) show a composition bias toward polar residues. Over residues 1167–1177 (SDSDDNESEDD) the composition is skewed to acidic residues. Pro residues predominate over residues 1250–1326 (PPIPTEVPPI…PPPPGPPPPV (77 aa)). The region spanning 1338–1355 (DIGALLGQIQGGKSLKKV) is the WH2 domain. A compositionally biased stretch (polar residues) spans 1357 to 1373 (ASQQKISSNDLAGTVLS).

It belongs to the PAN1 family. Component of the PAN1 actin cytoskeleton-regulatory complex.

Its subcellular location is the cell membrane. The protein localises to the endosome membrane. The protein resides in the cytoplasm. It localises to the cytoskeleton. It is found in the actin patch. Its function is as follows. Component of the PAN1 actin cytoskeleton-regulatory complex required for the internalization of endosomes during actin-coupled endocytosis. The complex links the site of endocytosis to the cell membrane-associated actin cytoskeleton. Mediates uptake of external molecules and vacuolar degradation of plasma membrane proteins. Plays a role in the proper organization of the cell membrane-associated actin cytoskeleton and promotes its destabilization. In Scheffersomyces stipitis (strain ATCC 58785 / CBS 6054 / NBRC 10063 / NRRL Y-11545) (Yeast), this protein is Actin cytoskeleton-regulatory complex protein PAN1 (PAN1).